A 336-amino-acid chain; its full sequence is MTESTARSIPLQIVQGDSPSAAPLQAGVKQLGGDKINRSPVQFADAPVLRKPSWIRVRIPSGNAVQNLKAKLRENRLVTVCEEASCPNIHECFGHGTATFMILGEVCTRRCSFCDVAHGRPKPPDANEPASLGQTVADMGLKYVVVTSVDRDDLRDGGAQHFVDCISAIREKSPGTRIEVLTPDFRGKGRMERALEILAQNPPDVFNHNIETVPDLYRNVRPGADYQWSLNLLKNFKAQHPEVPTKSGIMLGLGEEFEQIKATMRDLRAHDVDMITIGQYLQPTAHHHPVLKYWTPEDYKALEDYGYELGFSHVASGPMVRSSYHADVQAKGAGVS.

Residues Cys-81, Cys-86, Cys-92, Cys-107, Cys-111, Cys-114, and Ser-323 each contribute to the [4Fe-4S] cluster site. The region spanning 93-312 (FGHGTATFMI…EDYGYELGFS (220 aa)) is the Radical SAM core domain.

Belongs to the radical SAM superfamily. Lipoyl synthase family. [4Fe-4S] cluster is required as a cofactor.

The protein localises to the cytoplasm. It carries out the reaction [[Fe-S] cluster scaffold protein carrying a second [4Fe-4S](2+) cluster] + N(6)-octanoyl-L-lysyl-[protein] + 2 oxidized [2Fe-2S]-[ferredoxin] + 2 S-adenosyl-L-methionine + 4 H(+) = [[Fe-S] cluster scaffold protein] + N(6)-[(R)-dihydrolipoyl]-L-lysyl-[protein] + 4 Fe(3+) + 2 hydrogen sulfide + 2 5'-deoxyadenosine + 2 L-methionine + 2 reduced [2Fe-2S]-[ferredoxin]. It participates in protein modification; protein lipoylation via endogenous pathway; protein N(6)-(lipoyl)lysine from octanoyl-[acyl-carrier-protein]: step 2/2. In terms of biological role, catalyzes the radical-mediated insertion of two sulfur atoms into the C-6 and C-8 positions of the octanoyl moiety bound to the lipoyl domains of lipoate-dependent enzymes, thereby converting the octanoylated domains into lipoylated derivatives. This chain is Lipoyl synthase, found in Stenotrophomonas maltophilia (strain R551-3).